The sequence spans 372 residues: NAD(P)H-quinone oxidoreductase subunit 1 (372 aa).

Transmembrane regions (helical) follow at residues 27 to 47 (LIWL…GVLV), 97 to 117 (LLFT…WLIV), 128 to 148 (VGIG…GLLM), 166 to 186 (AAQS…VVMM), 204 to 224 (LLSW…ICAL), 266 to 286 (VLSS…PIPV), 308 to 328 (SVGI…AILL), and 347 to 367 (FLLP…LAFP).

It belongs to the complex I subunit 1 family. As to quaternary structure, NDH-1 is composed of at least 11 different subunits.

Its subcellular location is the cellular thylakoid membrane. It carries out the reaction a plastoquinone + NADH + (n+1) H(+)(in) = a plastoquinol + NAD(+) + n H(+)(out). It catalyses the reaction a plastoquinone + NADPH + (n+1) H(+)(in) = a plastoquinol + NADP(+) + n H(+)(out). In terms of biological role, NDH-1 shuttles electrons from an unknown electron donor, via FMN and iron-sulfur (Fe-S) centers, to quinones in the respiratory and/or the photosynthetic chain. The immediate electron acceptor for the enzyme in this species is believed to be plastoquinone. Couples the redox reaction to proton translocation, and thus conserves the redox energy in a proton gradient. This is NAD(P)H-quinone oxidoreductase subunit 1 from Prochlorococcus marinus (strain MIT 9313).